The following is a 1404-amino-acid chain: DNA (cytosine-5)-methyltransferase 3 (1404 aa).

The segment covering 1–10 (MKTKAGKQKK) has biased composition (basic residues). Positions 1 to 35 (MKTKAGKQKKRSVDSDDDVSRERRPKRATSGTNFK) are disordered. Residues 11 to 22 (RSVDSDDDVSRE) are compositionally biased toward basic and acidic residues. Lys-486 participates in a covalent cross-link: Glycyl lysine isopeptide (Lys-Gly) (interchain with G-Cter in ubiquitin). BAH domains lie at 614-748 (RKMD…FSLP) and 788-929 (IKYS…KKLP). The SAM-dependent MTase C5-type domain maps to 969–1402 (LATLDIFAGC…RKLKEALHLR (434 aa)). Cys-1085 is an active-site residue.

This sequence belongs to the class I-like SAM-binding methyltransferase superfamily. C5-methyltransferase family.

Its subcellular location is the nucleus. It catalyses the reaction a 2'-deoxycytidine in DNA + S-adenosyl-L-methionine = a 5-methyl-2'-deoxycytidine in DNA + S-adenosyl-L-homocysteine + H(+). Maintains chromatin CpG methylation that plays a role in genomic imprinting, regulation of embryogenesis and seed viability. Required for proper patterns of CG DNA methylation in dividing cells. Required during the endosperm development in seeds. The chain is DNA (cytosine-5)-methyltransferase 3 (MET3) from Arabidopsis thaliana (Mouse-ear cress).